The following is a 194-amino-acid chain: Fe/S biogenesis protein NfuA (194 aa).

Residues C151 and C154 each contribute to the [4Fe-4S] cluster site.

Belongs to the NfuA family. As to quaternary structure, homodimer. [4Fe-4S] cluster serves as cofactor.

Involved in iron-sulfur cluster biogenesis. Binds a 4Fe-4S cluster, can transfer this cluster to apoproteins, and thereby intervenes in the maturation of Fe/S proteins. Could also act as a scaffold/chaperone for damaged Fe/S proteins. The polypeptide is Fe/S biogenesis protein NfuA (Mannheimia succiniciproducens (strain KCTC 0769BP / MBEL55E)).